Consider the following 694-residue polypeptide: Acetolactate synthase catalytic subunit, mitochondrial (694 aa).

A mitochondrion-targeting transit peptide spans 1–42 (MLRSRQATNALRAVGQTRPLRSQTAVAFTQSLNKVPSNRRSE). Low complexity predominate over residues 45-58 (VATASSTASGAFNS). The segment at 45–69 (VATASSTASGAFNSQVRPTPSPTFN) is disordered. Residues 59–69 (QVRPTPSPTFN) show a composition bias toward polar residues. Position 140 (Glu-140) interacts with thiamine diphosphate. FAD-binding positions include Arg-242, 358–379 (HGSA…LGGR), and 410–429 (EIMP…IVGD). Positions 505 to 585 (QHQMWTAQHF…VKVIVLNNEE (81 aa)) are thiamine pyrophosphate binding. Residues Asp-556, Asn-583, and Glu-585 each coordinate Mg(2+).

The protein belongs to the TPP enzyme family. In terms of assembly, homodimer. Mg(2+) is required as a cofactor. Requires thiamine diphosphate as cofactor.

The protein localises to the mitochondrion. The catalysed reaction is 2 pyruvate + H(+) = (2S)-2-acetolactate + CO2. The enzyme catalyses 2-oxobutanoate + pyruvate + H(+) = (S)-2-ethyl-2-hydroxy-3-oxobutanoate + CO2. Its pathway is amino-acid biosynthesis; L-isoleucine biosynthesis; L-isoleucine from 2-oxobutanoate: step 1/4. The protein operates within amino-acid biosynthesis; L-valine biosynthesis; L-valine from pyruvate: step 1/4. Acetolactate synthase catalytic subunit, mitochondrial; part of the gene cluster that mediates the biosynthesis of chlorflavonin, a fungal flavonoid with acetolactate synthase inhibitory activity. Is not direcly involved in chlorflavonin biosynthesis but acts as a self-resistant protein that effectively confers chlorflavonin resistance to the native host. As a catalytic subunit of mitochondrial acetolactate synthase, catalyzes the first of a series of common steps in the biosynthesis of the branched-chain amino acids. Catalyzes the irreversible decarboxylation of pyruvate to a bound hydroxyethyl group that then condenses with either a second pyruvate molecule to form 2-acetolactate (AL) or with 2-ketobutyrate to form 2-aceto-2-hydroxybutyrate (AHB). The first product is the precursor for valine and leucine biosynthesis, while the second leads to isoleucine. This chain is Acetolactate synthase catalytic subunit, mitochondrial, found in Aspergillus candidus.